Here is a 223-residue protein sequence, read N- to C-terminus: Putative 3-methyladenine DNA glycosylase (223 aa).

Belongs to the DNA glycosylase MPG family.

The chain is Putative 3-methyladenine DNA glycosylase from Pseudomonas syringae pv. syringae (strain B728a).